Consider the following 121-residue polypeptide: Small ribosomal subunit protein uS13 (121 aa).

The segment at 94-121 (GLPVRGQRTRTNARTRKGKRKTVAGKKK) is disordered.

Belongs to the universal ribosomal protein uS13 family. As to quaternary structure, part of the 30S ribosomal subunit. Forms a loose heterodimer with protein S19. Forms two bridges to the 50S subunit in the 70S ribosome.

In terms of biological role, located at the top of the head of the 30S subunit, it contacts several helices of the 16S rRNA. In the 70S ribosome it contacts the 23S rRNA (bridge B1a) and protein L5 of the 50S subunit (bridge B1b), connecting the 2 subunits; these bridges are implicated in subunit movement. Contacts the tRNAs in the A and P-sites. This chain is Small ribosomal subunit protein uS13, found in Treponema pallidum (strain Nichols).